A 743-amino-acid chain; its full sequence is NAD(P)H-quinone oxidoreductase subunit 5, chloroplastic (743 aa).

The next 14 membrane-spanning stretches (helical) occupy residues 9 to 29 (WIIP…LLLF), 40 to 60 (WAFH…DLSI), 89 to 109 (IDPL…MVLI), 125 to 145 (FAYM…SNLI), 147 to 167 (IYIF…FWFT), 184 to 204 (IGDL…GSFE), 219 to 239 (NEVN…GAVA), 258 to 278 (TPIS…FLVA), 280 to 300 (LLPL…IGII), 396 to 416 (TAFF…CFWS), 425 to 445 (WLYS…TAFY), 548 to 568 (LLPL…GIPF), 607 to 627 (IFSV…YKPV), and 723 to 743 (YLFL…FLNL).

The protein belongs to the complex I subunit 5 family. As to quaternary structure, NDH is composed of at least 16 different subunits, 5 of which are encoded in the nucleus.

The protein resides in the plastid. Its subcellular location is the chloroplast thylakoid membrane. The enzyme catalyses a plastoquinone + NADH + (n+1) H(+)(in) = a plastoquinol + NAD(+) + n H(+)(out). It catalyses the reaction a plastoquinone + NADPH + (n+1) H(+)(in) = a plastoquinol + NADP(+) + n H(+)(out). In terms of biological role, NDH shuttles electrons from NAD(P)H:plastoquinone, via FMN and iron-sulfur (Fe-S) centers, to quinones in the photosynthetic chain and possibly in a chloroplast respiratory chain. The immediate electron acceptor for the enzyme in this species is believed to be plastoquinone. Couples the redox reaction to proton translocation, and thus conserves the redox energy in a proton gradient. The chain is NAD(P)H-quinone oxidoreductase subunit 5, chloroplastic (ndhF) from Carpenteria californica (Tree anemone).